We begin with the raw amino-acid sequence, 348 residues long: Protein RecA (348 aa).

ATP is bound at residue 65-72 (GPESSGKT). Residues 326-336 (LLTPAEEKPET) are compositionally biased toward basic and acidic residues. The interval 326-348 (LLTPAEEKPETDAAPEIEENEEF) is disordered. The segment covering 338–348 (AAPEIEENEEF) has biased composition (acidic residues).

The protein belongs to the RecA family.

It is found in the cytoplasm. Its function is as follows. Can catalyze the hydrolysis of ATP in the presence of single-stranded DNA, the ATP-dependent uptake of single-stranded DNA by duplex DNA, and the ATP-dependent hybridization of homologous single-stranded DNAs. It interacts with LexA causing its activation and leading to its autocatalytic cleavage. This Aliivibrio fischeri (strain ATCC 700601 / ES114) (Vibrio fischeri) protein is Protein RecA.